The following is a 512-amino-acid chain: 2-isopropylmalate synthase (512 aa).

The region spanning 4 to 266 (IEIFDTTLRD…TTKLNLKEIA (263 aa)) is the Pyruvate carboxyltransferase domain. Residues aspartate 13, histidine 201, histidine 203, and asparagine 237 each coordinate Mn(2+). Residues 390 to 512 (QLESVQLAYG…GEPTPVSATI (123 aa)) form a regulatory domain region.

It belongs to the alpha-IPM synthase/homocitrate synthase family. LeuA type 1 subfamily. In terms of assembly, homodimer. Mn(2+) is required as a cofactor.

It localises to the cytoplasm. The enzyme catalyses 3-methyl-2-oxobutanoate + acetyl-CoA + H2O = (2S)-2-isopropylmalate + CoA + H(+). The protein operates within amino-acid biosynthesis; L-leucine biosynthesis; L-leucine from 3-methyl-2-oxobutanoate: step 1/4. Catalyzes the condensation of the acetyl group of acetyl-CoA with 3-methyl-2-oxobutanoate (2-ketoisovalerate) to form 3-carboxy-3-hydroxy-4-methylpentanoate (2-isopropylmalate). This Brevibacillus brevis (strain 47 / JCM 6285 / NBRC 100599) protein is 2-isopropylmalate synthase.